A 162-amino-acid polypeptide reads, in one-letter code: Ribosome-binding factor A (162 aa).

The segment at 123–162 (VARVAAGASPAGDPDPYKEPRVEDADDAEVDEPSRSRQAD) is disordered. Over residues 125-136 (RVAAGASPAGDP) the composition is skewed to low complexity.

This sequence belongs to the RbfA family. As to quaternary structure, monomer. Binds 30S ribosomal subunits, but not 50S ribosomal subunits or 70S ribosomes.

It localises to the cytoplasm. Functionally, one of several proteins that assist in the late maturation steps of the functional core of the 30S ribosomal subunit. Associates with free 30S ribosomal subunits (but not with 30S subunits that are part of 70S ribosomes or polysomes). Required for efficient processing of 16S rRNA. May interact with the 5'-terminal helix region of 16S rRNA. This is Ribosome-binding factor A from Rhodococcus opacus (strain B4).